Here is a 451-residue protein sequence, read N- to C-terminus: Protein-tyrosine kinase 6 (451 aa).

One can recognise an SH3 domain in the interval 8–72; the sequence is HLGPKYVGLW…PHNYLAEKET (65 aa). Phosphotyrosine occurs at positions 13, 61, 66, and 114. In terms of domain architecture, SH2 spans 78 to 170; that stretch reads WFFGCISRSE…SHGLQLSMPC (93 aa). Residues 171-190 are linker; it reads WKHKTEPLPHWDDWERPREE. The Protein kinase domain maps to 191-445; sequence FTLCKKLGAG…DLCEKLTGIT (255 aa). ATP contacts are provided by residues 197-205 and Lys219; that span reads LGAGYFGEV. Residue Asp312 is the Proton acceptor of the active site. Tyr342 is subject to Phosphotyrosine; by autocatalysis. Phosphotyrosine occurs at positions 351 and 447.

This sequence belongs to the protein kinase superfamily. Tyr protein kinase family. BRK/PTK6/SIK subfamily. In terms of assembly, interacts with KHDRBS1. Interacts with phosphorylated IRS4. Interacts with GAP-A.p65. Interacts with ADAM15. Interacts (via SH3 and SH2 domains) with phosphorylated IRS4. Interacts (via SH3 domain) with SFPQ. Interacts with EGFR and ERBB2. Interacts with STAP2. Interacts with PNX. Interacts with SFPQ. Interacts with PTK/ATK. Interacts with CTNNB1. Post-translationally, autophosphorylated. Autophosphorylation of Tyr-342 leads to an increase of kinase activity. Tyr-447 binds to the SH2 domain when phosphorylated and negatively regulates kinase activity. In terms of tissue distribution, expressed only in epithelial tissues, including the skin and lining of the alimentary canal. Restricted to the cell layers immediately above the proliferative cell zone in these epithelia.

It is found in the cytoplasm. It localises to the nucleus. Its subcellular location is the membrane. The protein localises to the cell projection. The protein resides in the ruffle. The enzyme catalyses L-tyrosyl-[protein] + ATP = O-phospho-L-tyrosyl-[protein] + ADP + H(+). Activated by EGF, NRG1 and IGF1. Inhibited by SOCS3 to phosphorylate STAT3. Stabilized in the inactive form by an association between the SH3 domain and the SH2-TK linker region. Interaction between Trp-184 within SH2-TK linker region and the catalytic domain appears essential for positive regulation of kinase activity. Non-receptor tyrosine-protein kinase implicated in the regulation of a variety of signaling pathways that control the differentiation and maintenance of normal epithelia, as well as tumor growth. Function seems to be context dependent and differ depending on cell type, as well as its intracellular localization. A number of potential nuclear and cytoplasmic substrates have been identified. These include the RNA-binding proteins: KHDRBS1/SAM68, KHDRBS2/SLM1, KHDRBS3/SLM2 and SFPQ/PSF; transcription factors: STAT3 and STAT5A/B and a variety of signaling molecules: ARHGAP35/p190RhoGAP, PXN/paxillin, BTK/ATK, STAP2/BKS. Phosphorylates the GTPase-activating protein ARAP1 following EGF stimulation which enhances EGFR signaling by delaying EGFR down-regulation. Also associates with a variety of proteins that are likely upstream of PTK6 in various signaling pathways, or for which PTK6 may play an adapter-like role. These proteins include ADAM15, EGFR, ERBB2, ERBB3 and IRS4. In normal or non-tumorigenic tissues, PTK6 promotes cellular differentiation and apoptosis. In tumors PTK6 contributes to cancer progression by sensitizing cells to mitogenic signals and enhancing proliferation, anchorage-independent survival and migration/invasion. Association with EGFR, ERBB2, ERBB3 may contribute to mammary tumor development and growth through enhancement of EGF-induced signaling via BTK/AKT and PI3 kinase. Contributes to migration and proliferation by contributing to EGF-mediated phosphorylation of ARHGAP35/p190RhoGAP, which promotes association with RASA1/p120RasGAP, inactivating RhoA while activating RAS. EGF stimulation resulted in phosphorylation of PNX/Paxillin by PTK6 and activation of RAC1 via CRK/CrKII, thereby promoting migration and invasion. PTK6 activates STAT3 and STAT5B to promote proliferation. Nuclear PTK6 may be important for regulating growth in normal epithelia, while cytoplasmic PTK6 might activate oncogenic signaling pathways. This Mus musculus (Mouse) protein is Protein-tyrosine kinase 6 (Ptk6).